Reading from the N-terminus, the 158-residue chain is Sec-independent protein translocase protein TatB (158 aa).

A helical membrane pass occupies residues 2–22; it reads FDGIGFMELLLIGVLGLVVLG. The interval 86–158 is disordered; it reads LKQAAQSVNR…DTSSNPKANG (73 aa). Composition is skewed to polar residues over residues 88-107, 113-136, and 143-158; these read QAAQ…SQGT, QIHS…QHLT, and EPSQ…KANG.

This sequence belongs to the TatB family. The Tat system comprises two distinct complexes: a TatABC complex, containing multiple copies of TatA, TatB and TatC subunits, and a separate TatA complex, containing only TatA subunits. Substrates initially bind to the TatABC complex, which probably triggers association of the separate TatA complex to form the active translocon.

Its subcellular location is the cell inner membrane. Functionally, part of the twin-arginine translocation (Tat) system that transports large folded proteins containing a characteristic twin-arginine motif in their signal peptide across membranes. Together with TatC, TatB is part of a receptor directly interacting with Tat signal peptides. TatB may form an oligomeric binding site that transiently accommodates folded Tat precursor proteins before their translocation. The sequence is that of Sec-independent protein translocase protein TatB from Shewanella putrefaciens (strain CN-32 / ATCC BAA-453).